The sequence spans 507 residues: ATP synthase subunit alpha, mitochondrial (507 aa).

Position 171-178 (171-178 (GDRQTGKT)) interacts with ATP.

It belongs to the ATPase alpha/beta chains family. F-type ATPases have 2 components, CF(1) - the catalytic core - and CF(0) - the membrane proton channel. CF(1) has five subunits: alpha(3), beta(3), gamma(1), delta(1), epsilon(1). CF(0) has three main subunits: a, b and c.

It is found in the mitochondrion. Its subcellular location is the mitochondrion inner membrane. Functionally, mitochondrial membrane ATP synthase (F(1)F(0) ATP synthase or Complex V) produces ATP from ADP in the presence of a proton gradient across the membrane which is generated by electron transport complexes of the respiratory chain. F-type ATPases consist of two structural domains, F(1) - containing the extramembraneous catalytic core, and F(0) - containing the membrane proton channel, linked together by a central stalk and a peripheral stalk. During catalysis, ATP synthesis in the catalytic domain of F(1) is coupled via a rotary mechanism of the central stalk subunits to proton translocation. Subunits alpha and beta form the catalytic core in F(1). Rotation of the central stalk against the surrounding alpha(3)beta(3) subunits leads to hydrolysis of ATP in three separate catalytic sites on the beta subunits. Subunit alpha does not bear the catalytic high-affinity ATP-binding sites. This chain is ATP synthase subunit alpha, mitochondrial (ATPA), found in Brassica napus (Rape).